Reading from the N-terminus, the 280-residue chain is Small ribosomal subunit protein uS3 (280 aa).

Residues 38-106 (IRKLLATGLE…QVQLNILEVK (69 aa)) enclose the KH type-2 domain. The disordered stretch occupies residues 216–280 (AAAPAADRPR…SAGQPETTES (65 aa)). Over residues 237 to 270 (SGASGTTATSTDAGRAASEGTVEAPATEAAATAP) the composition is skewed to low complexity.

The protein belongs to the universal ribosomal protein uS3 family. In terms of assembly, part of the 30S ribosomal subunit. Forms a tight complex with proteins S10 and S14.

Functionally, binds the lower part of the 30S subunit head. Binds mRNA in the 70S ribosome, positioning it for translation. This Mycolicibacterium vanbaalenii (strain DSM 7251 / JCM 13017 / BCRC 16820 / KCTC 9966 / NRRL B-24157 / PYR-1) (Mycobacterium vanbaalenii) protein is Small ribosomal subunit protein uS3.